The primary structure comprises 400 residues: MAGATVTVDEVRKGQRATGPATVLAIGTATPANCVYQADYPDYYFRITKSDHLTDLKEKFKRMCDKSMIRKRYMHLTEEFLSENPSMCAYMAPSLDARQDVVVTEVPKLGKAAAQEAIKEWGQPKSRITHLVFCTTSGVDMPGADYQLTKALGLRVVNRLMMYQQGCFAGGTVLRVAKDVAENNRGARVMVVCSEITAVTFRGPSESHVDSLVGQALFGDGAAAGRGGADPDGRVERPLFQLVSAAQTILPDSEGAIDGHLREVGLAFHLLKDVPGLISKNIERALEDAFEPLGISDWNSIFWVAHPGGPAILDQVEAKVGLDKARMRATRHVLSEYGNMSSACVLFILDEMRKRPAEDGQSTTGEGLDWGVLFGFGPGLTVETVVLHSVPITTGAPTAA.

Residue cysteine 167 is part of the active site.

Belongs to the thiolase-like superfamily. Chalcone/stilbene synthases family.

The catalysed reaction is (E)-4-coumaroyl-CoA + 3 malonyl-CoA + 3 H(+) = 2',4,4',6'-tetrahydroxychalcone + 3 CO2 + 4 CoA. The protein operates within secondary metabolite biosynthesis; flavonoid biosynthesis. Its function is as follows. The primary product of this enzyme is 4,2',4',6'-tetrahydroxychalcone (also termed naringenin-chalcone or chalcone) which can under specific conditions spontaneously isomerize into naringenin. The chain is Chalcone synthase WHP1 (WHP1) from Zea mays (Maize).